A 257-amino-acid chain; its full sequence is Large ribosomal subunit protein eL8z (257 aa).

This sequence belongs to the eukaryotic ribosomal protein eL8 family.

This Arabidopsis thaliana (Mouse-ear cress) protein is Large ribosomal subunit protein eL8z (RPL7AA).